We begin with the raw amino-acid sequence, 146 residues long: 3-hydroxyacyl-[acyl-carrier-protein] dehydratase FabZ (146 aa).

Residue H49 is part of the active site.

Belongs to the thioester dehydratase family. FabZ subfamily.

The protein localises to the cytoplasm. The catalysed reaction is a (3R)-hydroxyacyl-[ACP] = a (2E)-enoyl-[ACP] + H2O. In terms of biological role, involved in unsaturated fatty acids biosynthesis. Catalyzes the dehydration of short chain beta-hydroxyacyl-ACPs and long chain saturated and unsaturated beta-hydroxyacyl-ACPs. This chain is 3-hydroxyacyl-[acyl-carrier-protein] dehydratase FabZ, found in Pseudomonas fluorescens (strain ATCC BAA-477 / NRRL B-23932 / Pf-5).